Here is a 24-residue protein sequence, read N- to C-terminus: Antimicrobial peptide PGQ (24 aa).

The protein belongs to the gastrin/cholecystokinin family. Magainin subfamily. In terms of tissue distribution, is synthesized in the stomach and stored in a novel granular multinucleated cell in the gastric mucosa. It is stored as active, processed peptides in large granules within the granular gland secretions of the skin.

The protein localises to the secreted. Functionally, antimicrobial peptide. In Xenopus laevis (African clawed frog), this protein is Antimicrobial peptide PGQ (pgq).